Consider the following 342-residue polypeptide: Polygalacturonase inhibitor 2 (342 aa).

The first 29 residues, 1–29 (MTQFNIPVTMSSSLSIILVILVSLSTAHS), serve as a signal peptide directing secretion. 2 disulfide bridges follow: Cys-32–Cys-62 and Cys-63–Cys-72. Residue Asn-64 is glycosylated (N-linked (GlcNAc...) (complex) asparagine). LRR repeat units follow at residues 82 to 107 (NNLDLSGLNLPKPYPIPSSLANLPYL), 108 to 132 (NFLYIGGINNLVGPIPPAIAKLTQL), 133 to 156 (HYLYITHTNVSGAIPDFLSQIKTL), 157 to 180 (VTLDFSYNALSGTLPPSISSLPNL), 181 to 205 (VGITFDGNRISGAIPDSYGSFSKLF), 206 to 228 (TSMTISRNRLTGKIPPTFANLNL), 229 to 252 (AFVDLSRNMLEGDASVLFGSDKNT), 253 to 275 (QKIHLAKNSLAFDLGKVGLSKNL), 276 to 299 (NGLDLRNNRIYGTLPQGLTQLKFL), and 300 to 319 (HSLNVSFNNLCGEIPQGGNL). Residue Asn-141 is glycosylated (N-linked (GlcNAc...) (complex) asparagine). The N-linked (GlcNAc...) asparagine glycan is linked to Asn-303. Intrachain disulfides connect Cys-310-Cys-332 and Cys-334-Cys-341.

Belongs to the polygalacturonase-inhibiting protein family. Asn-303 is not glycosylated.

It is found in the secreted. It localises to the cell wall. Its subcellular location is the membrane. Inhibitor of fungal polygalacturonase. It is an important factor for plant resistance to phytopathogenic fungi. Inhibits all polygalacturonases (PG) tested, with the exception of PG from F.oxysporum which was only inhibited at 60%. This chain is Polygalacturonase inhibitor 2 (PGIP2), found in Phaseolus vulgaris (Kidney bean).